The primary structure comprises 381 residues: Heterogeneous nuclear rnp K-like protein 2 (381 aa).

The interval 1 to 34 is disordered; it reads MSQFFEAATPVAIPTNNTNGGSSDAGSAATGGAP. Positions 15–33 are enriched in low complexity; sequence TNNTNGGSSDAGSAATGGA. KH domains are found at residues 43-107, 156-221, and 258-326; these read TINH…IGDI, IGYV…LIEI, and NTRI…ESML. The tract at residues 344–381 is disordered; the sequence is LEAAEGDATVVTERSDSASFLEEKEEPQENHDNKEEQS. Phosphoserine is present on residues Ser358, Ser360, and Ser362. The span at 370–381 shows a compositional bias: basic and acidic residues; that stretch reads PQENHDNKEEQS.

Belongs to the HEK2 family. Binds RNA. Post-translationally, phosphorylated by the plasma membrane-Anchored casein kinase YCK1. Phosphorylation at its C-terminus reduces its RNA-binding capacity.

It is found in the cytoplasm. Its subcellular location is the P-body. The protein resides in the nucleus. It localises to the chromosome. The protein localises to the telomere. In terms of biological role, RNA-binding protein involved in the correct localization of transcripts in the cell. RNA localization is a widespread mechanism for achieving localized protein synthesis. Required for the asymmetric localization to the daughter cell nucleus of the ASH1 transcript, coding for a specific repressor of transcription. Overexpression inhibits translation of the ASH1 transcript. Involved in the stability of transcripts, like the MTL1 mRNA. Involved in structural and functional organization of telomeric chromatin and regulates silencing at the HMR locus. The sequence is that of Heterogeneous nuclear rnp K-like protein 2 (HEK2) from Saccharomyces cerevisiae (strain YJM789) (Baker's yeast).